The primary structure comprises 215 residues: Adenylate kinase (215 aa).

10–15 (GAGKGT) is an ATP binding site. Positions 30–59 (STGDILRDAVSKGTELGKMAKAIMDRGELV) are NMP. AMP contacts are provided by residues threonine 31, arginine 36, 57-59 (ELV), 82-85 (GYPR), and glutamine 89. The segment at 123–160 (NRRVCPNCGKVYNLITLQPKEDEKCDVCGTKLIQRDDD) is LID. Arginine 124 contributes to the ATP binding site. Cysteine 127 and cysteine 130 together coordinate Zn(2+). An ATP-binding site is contributed by 133–134 (VY). Residues cysteine 147 and cysteine 150 each contribute to the Zn(2+) site. 2 residues coordinate AMP: arginine 157 and arginine 168. Glutamine 196 lines the ATP pocket.

Belongs to the adenylate kinase family. In terms of assembly, monomer.

It is found in the cytoplasm. The catalysed reaction is AMP + ATP = 2 ADP. It functions in the pathway purine metabolism; AMP biosynthesis via salvage pathway; AMP from ADP: step 1/1. Its function is as follows. Catalyzes the reversible transfer of the terminal phosphate group between ATP and AMP. Plays an important role in cellular energy homeostasis and in adenine nucleotide metabolism. In Petrotoga mobilis (strain DSM 10674 / SJ95), this protein is Adenylate kinase.